The chain runs to 117 residues: Large ribosomal subunit protein uL22 (117 aa).

It belongs to the universal ribosomal protein uL22 family. As to quaternary structure, part of the 50S ribosomal subunit.

Its function is as follows. This protein binds specifically to 23S rRNA; its binding is stimulated by other ribosomal proteins, e.g. L4, L17, and L20. It is important during the early stages of 50S assembly. It makes multiple contacts with different domains of the 23S rRNA in the assembled 50S subunit and ribosome. The globular domain of the protein is located near the polypeptide exit tunnel on the outside of the subunit, while an extended beta-hairpin is found that lines the wall of the exit tunnel in the center of the 70S ribosome. This chain is Large ribosomal subunit protein uL22, found in Lacticaseibacillus casei (strain BL23) (Lactobacillus casei).